The chain runs to 352 residues: Ubiquitin thioesterase otulin (352 aa).

A disordered region spans residues 1-48; that stretch reads MSRGTMPQPEAWPGASCAETPAREAAATARDGGKAAASGQPRPEMQCP. Residues 18-37 show a composition bias toward low complexity; that stretch reads AETPAREAAATARDGGKAAA. Residues 52-57 carry the PIM motif motif; it reads EEDMYR. Tyrosine 56 bears the Phosphotyrosine mark. Linear diubiquitin binding stretches follow at residues 95 to 96 and 124 to 126; these read EW and RGD. The OTU domain maps to 118–346; it reads TSIRRVRGDN…DRHYNIPVRV (229 aa). The active site involves aspartate 126. Cysteine 129 functions as the Nucleophile in the catalytic mechanism. Linear diubiquitin binding regions lie at residues 255-259, 283-289, and 336-338; these read FFSVL, TGGLEQV, and DDR. Histidine 339 is an active-site residue.

The protein belongs to the peptidase C65 family. Otulin subfamily. In terms of assembly, interacts (via the PUB domain) with RNF31 (via the PIM motif); the interaction is direct. Interacts with DVL2. Ubiquitinated. In terms of processing, acetylated. Post-translationally, phosphorylated. Phosphorylation at Tyr-56 prevents interaction with RNF31; dephosphorylation promotes interaction with RNF31 and the LUBAC complex.

Its subcellular location is the cytoplasm. It carries out the reaction Thiol-dependent hydrolysis of ester, thioester, amide, peptide and isopeptide bonds formed by the C-terminal Gly of ubiquitin (a 76-residue protein attached to proteins as an intracellular targeting signal).. Its function is as follows. Deubiquitinase that specifically removes linear ('Met-1'-linked) polyubiquitin chains to substrates and acts as a regulator of angiogenesis and innate immune response. Required during angiogenesis, craniofacial and neuronal development by regulating the canonical Wnt signaling together with the LUBAC complex. Acts as a negative regulator of NF-kappa-B by regulating the activity of the LUBAC complex. OTULIN function is mainly restricted to homeostasis of the LUBAC complex: acts by removing 'Met-1'-linked autoubiquitination of the LUBAC complex, thereby preventing inactivation of the LUBAC complex. Acts as a key negative regulator of inflammation by restricting spontaneous inflammation and maintaining immune homeostasis. In myeloid cell, required to prevent unwarranted secretion of cytokines leading to inflammation and autoimmunity by restricting linear polyubiquitin formation. Plays a role in innate immune response by restricting linear polyubiquitin formation on LUBAC complex in response to NOD2 stimulation, probably to limit NOD2-dependent pro-inflammatory signaling. The protein is Ubiquitin thioesterase otulin of Homo sapiens (Human).